Reading from the N-terminus, the 565-residue chain is Anaphase-promoting complex subunit 7 (565 aa).

10 TPR repeats span residues 101–134 (EIEV…RQRT), 169–202 (LDAI…LDWL), 203–236 (SVWI…LRDN), 237–270 (VDLL…DPYL), 339–372 (VQAL…APCR), 373–406 (LDCY…LGAN), 407–439 (AQTL…AQRP), 442–474 (VKAV…NQSD), 475–508 (CVLH…DPND), and 509–531 (QKSL…TQEE). K229 bears the N6-acetyllysine mark. The span at 513–523 (EGMQKMEKEES) shows a compositional bias: basic and acidic residues. The disordered stretch occupies residues 513 to 565 (EGMQKMEKEESPTDATQEEDVDDMEGSGEEGDLEGSDSEAAQWADQEQWFGMQ). Over residues 528–549 (TQEEDVDDMEGSGEEGDLEGSD) the composition is skewed to acidic residues.

The protein belongs to the APC7 family. As to quaternary structure, V-shaped homodimer. The mammalian APC/C is composed at least of 14 distinct subunits ANAPC1, ANAPC2, CDC27/APC3, ANAPC4, ANAPC5, CDC16/APC6, ANAPC7, CDC23/APC8, ANAPC10, ANAPC11, CDC26/APC12, ANAPC13, ANAPC15 and ANAPC16 that assemble into a complex of at least 19 chains with a combined molecular mass of around 1.2 MDa; APC/C interacts with FZR1 and FBXO5.

The protein localises to the cytoplasm. The protein resides in the cytoskeleton. It is found in the nucleus. Its subcellular location is the spindle. It participates in protein modification; protein ubiquitination. Its function is as follows. Component of the anaphase promoting complex/cyclosome (APC/C), a cell cycle-regulated E3 ubiquitin ligase that controls progression through mitosis and the G1 phase of the cell cycle. The APC/C complex acts by mediating ubiquitination and subsequent degradation of target proteins: it mainly mediates the formation of 'Lys-11'-linked polyubiquitin chains and, to a lower extent, the formation of 'Lys-48'- and 'Lys-63'-linked polyubiquitin chains. The APC/C complex catalyzes assembly of branched 'Lys-11'-/'Lys-48'-linked branched ubiquitin chains on target proteins. APC7 is not required for the assembly of the APC/C complex, but has an enzyme-substrate adapter activity mediating the processive ubiquitination of specific substrates. Involved in brain development through the specific ubiquitination and clearance of MKI67 from constitutive heterochromatin after neuronal progenitors exit mitosis. The polypeptide is Anaphase-promoting complex subunit 7 (Anapc7) (Mus musculus (Mouse)).